Consider the following 225-residue polypeptide: Class E basic helix-loop-helix protein 23 (225 aa).

Positions 35–104 are disordered; it reads EAARGYGTPG…PREQRSLRLS (70 aa). A bHLH domain is found at 100–154; that stretch reads SLRLSINARERRRMHDLNDALDGLRAVIPYAHSPSVRKLSKIATLLLAKNYILMQ.

It is found in the nucleus. Functionally, may function as transcriptional repressor. May modulate the expression of genes required for the differentiation and/or maintenance of pancreatic and neuronal cell types. May be important for rod bipolar cell maturation. The chain is Class E basic helix-loop-helix protein 23 (BHLHE23) from Homo sapiens (Human).